The sequence spans 329 residues: Acetyl-coenzyme A carboxylase carboxyl transferase subunit alpha (329 aa).

The CoA carboxyltransferase C-terminal domain maps to 40–294 (QLESLAARRR…RAAIERHLEQ (255 aa)).

It belongs to the AccA family. In terms of assembly, acetyl-CoA carboxylase is a heterohexamer composed of biotin carboxyl carrier protein (AccB), biotin carboxylase (AccC) and two subunits each of ACCase subunit alpha (AccA) and ACCase subunit beta (AccD).

Its subcellular location is the cytoplasm. It carries out the reaction N(6)-carboxybiotinyl-L-lysyl-[protein] + acetyl-CoA = N(6)-biotinyl-L-lysyl-[protein] + malonyl-CoA. The protein operates within lipid metabolism; malonyl-CoA biosynthesis; malonyl-CoA from acetyl-CoA: step 1/1. Component of the acetyl coenzyme A carboxylase (ACC) complex. First, biotin carboxylase catalyzes the carboxylation of biotin on its carrier protein (BCCP) and then the CO(2) group is transferred by the carboxyltransferase to acetyl-CoA to form malonyl-CoA. This is Acetyl-coenzyme A carboxylase carboxyl transferase subunit alpha from Synechococcus sp. (strain CC9605).